The primary structure comprises 87 residues: HssA/B-like protein 58 (87 aa).

Over residues Met-1–Pro-13 the composition is skewed to polar residues. The tract at residues Met-1–Met-31 is disordered. The span at Asn-14–Met-31 shows a compositional bias: low complexity.

This sequence belongs to the hssA/B family.

The polypeptide is HssA/B-like protein 58 (hssl58) (Dictyostelium discoideum (Social amoeba)).